A 441-amino-acid polypeptide reads, in one-letter code: Interferon-related developmental regulator 2 (441 aa).

Basic residues predominate over residues 1–15; it reads MPRARKGNALRKGGQ. The interval 1–51 is disordered; the sequence is MPRARKGNALRKGGQRRGGGARSSTQADSGSSEDEAASEARSTTSDCPSLL.

This sequence belongs to the IFRD family. Associates with ribosomes; promoting ribosome inactivation.

Functionally, ribosome-binding protein that acts as an inhibitor of mRNA translation by promoting ribosome inactivation. Associates with the P- and E-sites of the ribosome and inserts a C-terminal helix into the mRNA exit channel to preclude translation. This chain is Interferon-related developmental regulator 2, found in Mus musculus (Mouse).